The following is a 456-amino-acid chain: Two pore potassium channel c (456 aa).

Low complexity predominate over residues 1 to 19 (MDTEPLLSPLSPSPHLLHP). The tract at residues 1–112 (MDTEPLLSPL…PPSLFDFIGG (112 aa)) is disordered. The Cytoplasmic portion of the chain corresponds to 1–152 (MDTEPLLSPL…RNPPPPPRRP (152 aa)). Over residues 52 to 67 (HPPPPPPPPPPPPPPP) the composition is skewed to pro residues. The chain crosses the membrane as a helical span at residues 153 to 173 (AIVLHAFLFLLAYLAMGVTFY). Positions 192 to 211 (DALYFCIVTLCTIGYGDITP) form an intramembrane region, pore-forming. Residues 223–243 (FVLIGFGFVDILLSGMVSYVL) traverse the membrane as a helical segment. Residues 244–279 (DLQEHLLITALKNPRSVRKHRHNYIFDLKKGRMRVR) are Cytoplasmic-facing. A helical transmembrane segment spans residues 280–300 (MKVALALTVVAICVGVGAAVL). The segment at residues 310-329 (DAVYLAVMSVTTVGYGDHAF) is an intramembrane region (pore-forming). A helical transmembrane segment spans residues 336–356 (LFASAWLLVSTLAVARAFLYL). The Cytoplasmic portion of the chain corresponds to 357–456 (AEMRIDKRHR…LNEKKKGKKS (100 aa)). 2 consecutive EF-hand domains span residues 373-408 (LSRD…EMGK) and 412-447 (KDIM…VTDL). The Ca(2+) site is built by aspartate 386, aspartate 388, asparagine 390, tyrosine 392, glutamate 397, aspartate 425, lysine 431, and aspartate 436.

The protein belongs to the two pore domain potassium channel (TC 1.A.1.7) family. In terms of assembly, homodimer.

The protein resides in the membrane. Functionally, inward-rectifying potassium channel. The polypeptide is Two pore potassium channel c (TPKC) (Oryza sativa subsp. japonica (Rice)).